We begin with the raw amino-acid sequence, 139 residues long: Translation initiation factor 5A (139 aa).

Lys36 is subject to Hypusine.

This sequence belongs to the eIF-5A family.

It localises to the cytoplasm. Functionally, functions by promoting the formation of the first peptide bond. In Aeropyrum pernix (strain ATCC 700893 / DSM 11879 / JCM 9820 / NBRC 100138 / K1), this protein is Translation initiation factor 5A (eif5a).